The chain runs to 402 residues: Choline dehydrogenase (402 aa).

The protein belongs to the iron-containing alcohol dehydrogenase family.

It carries out the reaction choline + NAD(+) = betaine aldehyde + NADH + H(+). It functions in the pathway amine and polyamine biosynthesis; betaine biosynthesis via choline pathway; betaine aldehyde from choline (dehydrogenase route): step 1/1. Involved in the biosynthesis of the osmoprotectant glycine betaine from choline. The sequence is that of Choline dehydrogenase from Bacillus subtilis (strain 168).